The following is a 209-amino-acid chain: tRNA (guanine-N(7)-)-methyltransferase (209 aa).

S-adenosyl-L-methionine-binding residues include D35, E60, N87, and D113. The active site involves D113. Substrate is bound by residues K117 and D149.

It belongs to the class I-like SAM-binding methyltransferase superfamily. TrmB family.

The catalysed reaction is guanosine(46) in tRNA + S-adenosyl-L-methionine = N(7)-methylguanosine(46) in tRNA + S-adenosyl-L-homocysteine. The protein operates within tRNA modification; N(7)-methylguanine-tRNA biosynthesis. In terms of biological role, catalyzes the formation of N(7)-methylguanine at position 46 (m7G46) in tRNA. The chain is tRNA (guanine-N(7)-)-methyltransferase from Prochlorococcus marinus (strain MIT 9515).